The primary structure comprises 234 residues: UPF0173 metal-dependent hydrolase Rleg2_1519 (234 aa).

Belongs to the UPF0173 family.

This is UPF0173 metal-dependent hydrolase Rleg2_1519 from Rhizobium leguminosarum bv. trifolii (strain WSM2304).